We begin with the raw amino-acid sequence, 371 residues long: RNA polymerase sigma factor SigA (371 aa).

The interval 137–207 (LAEANLRLVV…TRAIADQART (71 aa)) is sigma-70 factor domain-2. Residues 161-164 (DLIQ) carry the Interaction with polymerase core subunit RpoC motif. The interval 216 to 292 (ETINKLVREQ…DEVIENPVDY (77 aa)) is sigma-70 factor domain-3. Residues 305–358 (VLDTLTDREENVLRLRFGLDDGKMRTLEDVGKVFDVTRERIRQIEAKALRKLRH) are sigma-70 factor domain-4. A DNA-binding region (H-T-H motif) is located at residues 331–350 (LEDVGKVFDVTRERIRQIEA).

The protein belongs to the sigma-70 factor family. RpoD/SigA subfamily. As to quaternary structure, interacts transiently with the RNA polymerase catalytic core.

The protein resides in the cytoplasm. In terms of biological role, sigma factors are initiation factors that promote the attachment of RNA polymerase to specific initiation sites and are then released. This sigma factor is the primary sigma factor during exponential growth. In Streptococcus mutans serotype c (strain ATCC 700610 / UA159), this protein is RNA polymerase sigma factor SigA.